Reading from the N-terminus, the 177-residue chain is ATP synthase subunit delta (177 aa).

Belongs to the ATPase delta chain family. As to quaternary structure, F-type ATPases have 2 components, F(1) - the catalytic core - and F(0) - the membrane proton channel. F(1) has five subunits: alpha(3), beta(3), gamma(1), delta(1), epsilon(1). F(0) has three main subunits: a(1), b(2) and c(10-14). The alpha and beta chains form an alternating ring which encloses part of the gamma chain. F(1) is attached to F(0) by a central stalk formed by the gamma and epsilon chains, while a peripheral stalk is formed by the delta and b chains.

The protein localises to the cell inner membrane. In terms of biological role, f(1)F(0) ATP synthase produces ATP from ADP in the presence of a proton or sodium gradient. F-type ATPases consist of two structural domains, F(1) containing the extramembraneous catalytic core and F(0) containing the membrane proton channel, linked together by a central stalk and a peripheral stalk. During catalysis, ATP synthesis in the catalytic domain of F(1) is coupled via a rotary mechanism of the central stalk subunits to proton translocation. Functionally, this protein is part of the stalk that links CF(0) to CF(1). It either transmits conformational changes from CF(0) to CF(1) or is implicated in proton conduction. In Flavobacterium johnsoniae (strain ATCC 17061 / DSM 2064 / JCM 8514 / BCRC 14874 / CCUG 350202 / NBRC 14942 / NCIMB 11054 / UW101) (Cytophaga johnsonae), this protein is ATP synthase subunit delta.